We begin with the raw amino-acid sequence, 165 residues long: Putative universal stress protein SH1215 (165 aa).

It belongs to the universal stress protein A family.

The protein resides in the cytoplasm. This is Putative universal stress protein SH1215 from Staphylococcus haemolyticus (strain JCSC1435).